The primary structure comprises 892 residues: MEGPEIKAVEAVIDNGSFGKRTLRFETGRLAQQADGAVAAYLDDDSMILSTTTAGSSPKENYDFFPLTVDVEEKMYAAGKIPGSFFRREGRPSSEAILACRIIDRPLRPLFPHTLRNEVQVVETVLAVNPDDAYDVVALNAASASTMISGLPFEGPVSGVRLALIDGQWVAFPRWSERERAVFEIVVAGRVVENGDVAIAMIEAGAGKNAWHLIYDEGQTKPDEEVVAGGLEAAKPFIKVICEAQAELKKIAAKETKEFQLFPEYTEDLYNRIDEIAHADLDEALSIAEKLPRQDRIHEIKEGVKATLAGEFTDMEDAEKDKEIGNAFKELQRQIVRRRILTQDYRIDGRGLRDIRTLSAEVDIVPRVHGSALFQRGETQILGVTTLNMLKMEQQIDALSGPQSKRYMHNYEMPPYSTGETGRVGSPKRREIGHGALAEKALVPVLPSREEFPYAIRQVSEAIGSNGSTSMGSVCASTLSLLAAGVPLKAPVAGIAMGLVSGDVDGQHIYKTLTDILGAEDAFGDMDFKVAGTSEFITALQLDTKLDGIPADILASALQQAKEARTTILEVINECIDGPAEMSPYAPRIITTTVPVDKIGEVIGPKGKMINQIQEDTGAEIAIEDDGTVYISSEGGEAAEKAKEIIDQIANPHVPEAGETYNGKVVKTTSFGAFVNLTPGTDGLLHISQIRNLANGERIDAVEDVLKEGDTVEVVVQGVDDRGKISLAIPGFEDQESSAPRRDRGDRDDRRGGRGRRDDRRRSDDRDDRDYDDRPRRRRSDRDDDRDYDDRPRRRRSDRDDRDYDRDDRRSSRSDRDDRDYDDRPRRRRSDRDDRDYDRDDRRSDRRRGSRRDDRNPRYAADENYDEYRADREERSERPRRRVRRDFDPFED.

Positions 407–427 are disordered; it reads YMHNYEMPPYSTGETGRVGSP. Asp521 and Asp527 together coordinate Mg(2+). Residues 587 to 646 form the KH domain; sequence PRIITTTVPVDKIGEVIGPKGKMINQIQEDTGAEIAIEDDGTVYISSEGGEAAEKAKEII. Residues 658-730 form the S1 motif domain; that stretch reads GETYNGKVVK…DRGKISLAIP (73 aa). The tract at residues 727 to 892 is disordered; that stretch reads LAIPGFEDQE…VRRDFDPFED (166 aa). Basic and acidic residues-rich tracts occupy residues 739–844 and 851–877; these read APRR…DRRS and RRDD…ERSE.

Belongs to the polyribonucleotide nucleotidyltransferase family. Requires Mg(2+) as cofactor.

Its subcellular location is the cytoplasm. It carries out the reaction RNA(n+1) + phosphate = RNA(n) + a ribonucleoside 5'-diphosphate. Its function is as follows. Involved in mRNA degradation. Catalyzes the phosphorolysis of single-stranded polyribonucleotides processively in the 3'- to 5'-direction. This chain is Polyribonucleotide nucleotidyltransferase, found in Bifidobacterium adolescentis (strain ATCC 15703 / DSM 20083 / NCTC 11814 / E194a).